Here is a 232-residue protein sequence, read N- to C-terminus: Thiamine import ATP-binding protein ThiQ (232 aa).

The ABC transporter domain occupies 2–230 (LKLTDITWLY…KASASALLGI (229 aa)). 32–39 (GPSGAGKS) provides a ligand contact to ATP.

The protein belongs to the ABC transporter superfamily. Thiamine importer (TC 3.A.1.19.1) family. As to quaternary structure, the complex is composed of two ATP-binding proteins (ThiQ), two transmembrane proteins (ThiP) and a solute-binding protein (ThiB).

The protein resides in the cell inner membrane. The enzyme catalyses thiamine(out) + ATP + H2O = thiamine(in) + ADP + phosphate + H(+). In terms of biological role, part of the ABC transporter complex ThiBPQ involved in thiamine import. Responsible for energy coupling to the transport system. In Escherichia coli (strain UTI89 / UPEC), this protein is Thiamine import ATP-binding protein ThiQ.